We begin with the raw amino-acid sequence, 339 residues long: MTMNIGVIGCGLMGADHIRTLTTAVSGARVAAVNDADEGRAAGAAAEAEGARVHSDPFGLIDDAEVDAVVVASADETHEEFALACVRAGKPVLCEKPLATTSEACLRVVEAEMRGGRPLVQVGFMRRFDPSYLEMKRVLDSGRIGRALMLHSVHRNAGYPPALPDSALITGTGVHDIDIARWLLGQEIVTATAHTPRRSGLARPDFQDTRFLVLETENGVLVDVEIFVNAGYGYDVRGELVGELGSISLHPPATLTTRYEGLEGRPVARDFRPRFQDAYRNELQAWVTAGASGEVRGATAWDGYASAAVAEACLHSVATGSTAPVEIAPQPALYAPLAA.

The protein belongs to the Gfo/Idh/MocA family. As to quaternary structure, homotetramer.

The enzyme catalyses myo-inositol + NAD(+) = scyllo-inosose + NADH + H(+). Functionally, involved in the oxidation of myo-inositol (MI) to 2-keto-myo-inositol (2KMI or 2-inosose). This Saccharopolyspora erythraea (strain ATCC 11635 / DSM 40517 / JCM 4748 / NBRC 13426 / NCIMB 8594 / NRRL 2338) protein is Inositol 2-dehydrogenase 2.